The following is a 691-amino-acid chain: Dipeptidyl-peptidase 5 (691 aa).

A signal peptide spans 1 to 20 (MKRTILSLLAAVSLAIPVYA). Active-site charge relay system residues include serine 549, aspartate 634, and histidine 666.

The protein belongs to the peptidase S9C family. As to quaternary structure, homodimer.

It is found in the periplasm. Its function is as follows. Catalyzes the removal of dipeptides from the N-terminus of oligopeptides. Prefers Ala and hydrophobic residues at the P1 position, and has no preference for P2 residues. Shows the highest dipeptidyl peptidase activity toward the synthetic substrate Lys-Ala-methylcoumaryl-7-amide (Lys-Ala-MCA). Is likely involved in amino acid metabolism and bacterial growth/survival of asaccharolytic P.endodontalis, that utilizes amino acids from extracellular proteinaceous nutrients as energy and carbon sources. In Porphyromonas endodontalis (strain ATCC 35406 / DSM 24491 / JCM 8526 / CCUG 16442 / BCRC 14492 / NCTC 13058 / HG 370) (Bacteroides endodontalis), this protein is Dipeptidyl-peptidase 5.